A 976-amino-acid polypeptide reads, in one-letter code: Alpha-amylase (976 aa).

Residues 1–33 (MKRGKLWGRLVSAAGLSLSIFLSSIGNVSTAYA) form the signal peptide. Positions 45–98 (TKENTESATDASSNEASDAEADNDTDEAITDASSKELSAENDGASESDSSFDEY) are disordered. Residues 50-60 (ESATDASSNEA) show a composition bias toward low complexity. 2 stretches are compositionally biased toward acidic residues: residues 61–73 (SDAEADNDTDEAI) and 87–96 (GASESDSSFD). Ca(2+) contacts are provided by Asn243, Thr284, and Asp293. Asp323 functions as the Nucleophile in the catalytic mechanism. His327 provides a ligand contact to Ca(2+). Glu375 (proton donor) is an active-site residue.

Belongs to the glycosyl hydrolase 13 family. As to quaternary structure, monomer. It depends on Ca(2+) as a cofactor.

It catalyses the reaction Endohydrolysis of (1-&gt;4)-alpha-D-glucosidic linkages in polysaccharides containing three or more (1-&gt;4)-alpha-linked D-glucose units.. The polypeptide is Alpha-amylase (amyA) (Butyrivibrio fibrisolvens).